The following is a 357-amino-acid chain: Probable 3'(2'),5'-bisphosphate nucleotidase 3 (357 aa).

The active-site Proton acceptor is the aspartate 46. Residues glutamate 71, aspartate 135, and isoleucine 137 each coordinate Mg(2+). Threonine 140 acts as the Proton acceptor in catalysis. 4 residues coordinate adenosine 3',5'-bisphosphate: threonine 140, serine 256, lysine 259, and arginine 273. Positions 256, 259, and 273 each coordinate AMP.

Belongs to the inositol monophosphatase superfamily. Mg(2+) serves as cofactor.

The enzyme catalyses 3'-phosphoadenylyl sulfate + H2O = adenosine 5'-phosphosulfate + phosphate. It catalyses the reaction adenosine 3',5'-bisphosphate + H2O = AMP + phosphate. The catalysed reaction is adenosine 2',5'-bisphosphate + H2O = AMP + phosphate. It carries out the reaction 1D-myo-inositol 1,4-bisphosphate + H2O = 1D-myo-inositol 4-phosphate + phosphate. The enzyme catalyses 1D-myo-inositol 1,3,4-trisphosphate + H2O = 1D-myo-inositol 3,4-bisphosphate + phosphate. It participates in signal transduction; phosphatidylinositol signaling pathway. Functionally, phosphatase that converts adenosine 3'-phosphate 5'-phosphosulfate (PAPS) to adenosine 5'-phosphosulfate (APS) and 3'(2')-phosphoadenosine 5'-phosphate (PAP) to AMP. Is also able to hydrolyze inositol 1,4-bisphosphate and inositol 1,3,4-trisphosphate. The sequence is that of Probable 3'(2'),5'-bisphosphate nucleotidase 3 (SAL3) from Arabidopsis thaliana (Mouse-ear cress).